A 270-amino-acid chain; its full sequence is Aliphatic sulfonates import ATP-binding protein SsuB 2 (270 aa).

Positions 17-241 constitute an ABC transporter domain; sequence LLDLRIARKL…PRDRRDPSLA (225 aa). An ATP-binding site is contributed by 50-57; it reads GPSGCGKS.

The protein belongs to the ABC transporter superfamily. Aliphatic sulfonates importer (TC 3.A.1.17.2) family. As to quaternary structure, the complex is composed of two ATP-binding proteins (SsuB), two transmembrane proteins (SsuC) and a solute-binding protein (SsuA).

Its subcellular location is the cell inner membrane. The catalysed reaction is ATP + H2O + aliphatic sulfonate-[sulfonate-binding protein]Side 1 = ADP + phosphate + aliphatic sulfonateSide 2 + [sulfonate-binding protein]Side 1.. Part of the ABC transporter complex SsuABC involved in aliphatic sulfonates import. Responsible for energy coupling to the transport system. The protein is Aliphatic sulfonates import ATP-binding protein SsuB 2 of Burkholderia cenocepacia (strain HI2424).